The chain runs to 140 residues: Phosphopantetheine adenylyltransferase (140 aa).

A substrate-binding site is contributed by Ser9. Residues 9 to 10 and His17 each bind ATP; that span reads SF. Positions 41, 74, and 88 each coordinate substrate. ATP is bound by residues 89–91, Glu99, and 124–130; these read GLR and KRSLSST.

Belongs to the bacterial CoaD family. In terms of assembly, homohexamer. Requires Mg(2+) as cofactor.

It is found in the cytoplasm. The catalysed reaction is (R)-4'-phosphopantetheine + ATP + H(+) = 3'-dephospho-CoA + diphosphate. It functions in the pathway cofactor biosynthesis; coenzyme A biosynthesis; CoA from (R)-pantothenate: step 4/5. Its function is as follows. Reversibly transfers an adenylyl group from ATP to 4'-phosphopantetheine, yielding dephospho-CoA (dPCoA) and pyrophosphate. The sequence is that of Phosphopantetheine adenylyltransferase from Mycoplasma mycoides subsp. mycoides SC (strain CCUG 32753 / NCTC 10114 / PG1).